Reading from the N-terminus, the 510-residue chain is Probable cytosol aminopeptidase (510 aa).

Mn(2+) is bound by residues K272 and D277. Residue K284 is part of the active site. Positions 296, 355, and 357 each coordinate Mn(2+). Residue R359 is part of the active site.

This sequence belongs to the peptidase M17 family. Requires Mn(2+) as cofactor.

It localises to the cytoplasm. It carries out the reaction Release of an N-terminal amino acid, Xaa-|-Yaa-, in which Xaa is preferably Leu, but may be other amino acids including Pro although not Arg or Lys, and Yaa may be Pro. Amino acid amides and methyl esters are also readily hydrolyzed, but rates on arylamides are exceedingly low.. The enzyme catalyses Release of an N-terminal amino acid, preferentially leucine, but not glutamic or aspartic acids.. Presumably involved in the processing and regular turnover of intracellular proteins. Catalyzes the removal of unsubstituted N-terminal amino acids from various peptides. The polypeptide is Probable cytosol aminopeptidase (Synechococcus sp. (strain JA-2-3B'a(2-13)) (Cyanobacteria bacterium Yellowstone B-Prime)).